A 244-amino-acid chain; its full sequence is Small ribosomal subunit protein uS3 (244 aa).

In terms of domain architecture, KH type-2 spans 38–106 (IRKYLNARLA…DIQINIFEVK (69 aa)). A disordered region spans residues 217-244 (TQSKESGRGNNGGNNGGGKNFKRKKNNR). Residues 225 to 235 (GNNGGNNGGGK) are compositionally biased toward gly residues.

The protein belongs to the universal ribosomal protein uS3 family. Part of the 30S ribosomal subunit. Forms a tight complex with proteins S10 and S14.

Functionally, binds the lower part of the 30S subunit head. Binds mRNA in the 70S ribosome, positioning it for translation. The sequence is that of Small ribosomal subunit protein uS3 from Bacteroides fragilis (strain ATCC 25285 / DSM 2151 / CCUG 4856 / JCM 11019 / LMG 10263 / NCTC 9343 / Onslow / VPI 2553 / EN-2).